Consider the following 131-residue polypeptide: D-ribose pyranase (131 aa).

The active-site Proton donor is the H20. Residues D28, H98, and 120 to 122 (YAN) each bind substrate.

This sequence belongs to the RbsD / FucU family. RbsD subfamily. As to quaternary structure, homodecamer.

The protein localises to the cytoplasm. The catalysed reaction is beta-D-ribopyranose = beta-D-ribofuranose. The protein operates within carbohydrate metabolism; D-ribose degradation; D-ribose 5-phosphate from beta-D-ribopyranose: step 1/2. Catalyzes the interconversion of beta-pyran and beta-furan forms of D-ribose. The sequence is that of D-ribose pyranase from Clostridium perfringens (strain ATCC 13124 / DSM 756 / JCM 1290 / NCIMB 6125 / NCTC 8237 / Type A).